A 306-amino-acid chain; its full sequence is ATP synthase gamma chain (306 aa).

Belongs to the ATPase gamma chain family. F-type ATPases have 2 components, CF(1) - the catalytic core - and CF(0) - the membrane proton channel. CF(1) has five subunits: alpha(3), beta(3), gamma(1), delta(1), epsilon(1). CF(0) has three main subunits: a, b and c.

The protein resides in the cell membrane. In terms of biological role, produces ATP from ADP in the presence of a proton gradient across the membrane. The gamma chain is believed to be important in regulating ATPase activity and the flow of protons through the CF(0) complex. The sequence is that of ATP synthase gamma chain from Bifidobacterium adolescentis (strain ATCC 15703 / DSM 20083 / NCTC 11814 / E194a).